We begin with the raw amino-acid sequence, 1152 residues long: Autotransporter adhesin BpaC (1152 aa).

The first 71 residues, 1–71 (MNRIFKSIWC…PFAEEAMAAN (71 aa)), serve as a signal peptide directing secretion. Residues 72–1061 (NAGVCLTYNG…VGQLNSAVSG (990 aa)) form a surface exposed passenger domain region. 2 disordered regions span residues 420 to 886 (GLQG…AGAT) and 900 to 949 (TATG…ESAA). Over residues 427-442 (ANTGTASGDNSTASGD) the composition is skewed to polar residues. Positions 443–504 (NATASGTNST…ANGTNSTASG (62 aa)) are enriched in low complexity. A compositionally biased stretch (polar residues) spans 505–519 (DNSTASGTNASATGE). Low complexity predominate over residues 520–588 (NSTATGTDST…ANGTNSTASG (69 aa)). Polar residues predominate over residues 589–603 (DNSTASGTNASATGE). The span at 604–630 (NSTATGTDSTASGSNSTANGTNSTASG) shows a compositional bias: low complexity. The segment covering 631–645 (DNSTASGTNASATGE) has biased composition (polar residues). Residues 646–672 (NSTATGTDSTASGSNSTANGTNSTASG) are compositionally biased toward low complexity. The segment covering 673–687 (DNSTASGTNASATGE) has biased composition (polar residues). Low complexity predominate over residues 688–714 (NSTATGTDSTASGSNSTANGTNSTASG). Residues 715 to 729 (DNSTASGTNASATGE) are compositionally biased toward polar residues. A compositionally biased stretch (low complexity) spans 730-756 (NSTATGTDSTASGSNSTANGANSTASG). Over residues 757–771 (DNSTASGTNASATGE) the composition is skewed to polar residues. Low complexity-rich tracts occupy residues 772-840 (NSTA…TASG) and 848-886 (TNAS…AGAT). Residues 1062 to 1099 (IRNQMDGMQGQIDTLARDAYSGIAAATALTMIPDVDPG) form an outer membrane translocation of the passenger domain region. The tract at residues 1100 to 1152 (KTLAVGIGTANFKGYQASALGATARITQNLKVKTGVSYSGSNYVWGAGMSYQW) is translocator domain.

The protein belongs to the autotransporter-2 (AT-2) (TC 1.B.40) family. Homotrimer.

Its subcellular location is the cell surface. It is found in the cell outer membrane. Its function is as follows. Involved in virulence. Mediates adherence to human respiratory epithelial cells. The chain is Autotransporter adhesin BpaC from Burkholderia pseudomallei (strain 1026b).